The primary structure comprises 470 residues: Acetyl-CoA decarbonylase/synthase complex subunit gamma 1 (470 aa).

In terms of domain architecture, 4Fe-4S spans 1 to 60 (MKINSPLEAYKYLPQTNCGECGQPTCMAFASTLIDRSGKTTDCPPLIKEKKFAKKLAELD). Residues cysteine 18, cysteine 21, cysteine 26, and cysteine 43 each coordinate [4Fe-4S] cluster.

In terms of assembly, heterodimer of delta and gamma chains. The ACDS complex is made up of alpha, epsilon, beta, gamma and delta chains with a probable stoichiometry of (alpha(2)epsilon(2))(4)-beta(8)-(gamma(1)delta(1))(8). Corrinoid is required as a cofactor. It depends on [4Fe-4S] cluster as a cofactor.

The enzyme catalyses 5,6,7,8-tetrahydrosarcinapterin + methyl-Co(III)-[corrinoid Fe-S protein] = 5-methyltetrahydrosarcinapterin + Co(I)-[corrinoid Fe-S protein] + H(+). It participates in one-carbon metabolism; methanogenesis from acetate. In terms of biological role, part of a complex that catalyzes the reversible cleavage of acetyl-CoA, allowing growth on acetate as sole source of carbon and energy. This chain is Acetyl-CoA decarbonylase/synthase complex subunit gamma 1, found in Methanosarcina mazei (strain ATCC BAA-159 / DSM 3647 / Goe1 / Go1 / JCM 11833 / OCM 88) (Methanosarcina frisia).